Consider the following 487-residue polypeptide: MKYNDLRDFLAQLELRGELKRVDIEVSPHLEMTEICDRLLKQAGPAVLFERPAGHTIPVLGNLFGTPERVALGMGQTSVSALREVGKLLAYLKEPEPPKGLRDAWDKLPILKQVLNMPPRELASAPCQEIVWEGADVDLSKLPIQTCWPGDVASLITWGLTVTRGPHKSRQNLGIYRQQVIAPNKVIMRWLAHRGGALDYRDFCQINPGEPYPVAVALGADPATILGAVTPVPDSLSEYQFAGLLRGAKTEIVKCLTHDLQVPASAEIVLEGYIYPNETALEGPYGDHTGYYNEQETFPVFTIERITMRRDPIYHSTYTGKPPDEPAILGVALNEVFVPLLQKQFTEITDFYLPPEGCSYRLAVVSMKKQYPGHAKRVMFGIWSFLRQFMYTKFIIVTDDDINIRDWKEVIWAITTRVDPVRDTLIVENTPIDYLDFASPVSGLGSKMGLDATNKWPGETSREWGRVIEMDAAVKARVDHLWQQLLF.

Residue Asn172 participates in Mn(2+) binding. Prenylated FMN contacts are provided by residues 175–177, 189–191, and 194–195; these read IYR, RWL, and RG. Glu238 lines the Mn(2+) pocket. Asp287 acts as the Proton donor in catalysis.

Belongs to the UbiD family. In terms of assembly, homohexamer. Prenylated FMN serves as cofactor. Requires Mn(2+) as cofactor.

It is found in the cell membrane. The enzyme catalyses a 4-hydroxy-3-(all-trans-polyprenyl)benzoate + H(+) = a 2-(all-trans-polyprenyl)phenol + CO2. Its pathway is cofactor biosynthesis; ubiquinone biosynthesis. Its function is as follows. Catalyzes the decarboxylation of 3-octaprenyl-4-hydroxy benzoate to 2-octaprenylphenol, an intermediate step in ubiquinone biosynthesis. This is 3-octaprenyl-4-hydroxybenzoate carboxy-lyase from Nitrosomonas eutropha (strain DSM 101675 / C91 / Nm57).